An 83-amino-acid polypeptide reads, in one-letter code: Small ribosomal subunit protein eS21 (83 aa).

It belongs to the eukaryotic ribosomal protein eS21 family. In terms of assembly, component of the 40S small ribosomal subunit.

The protein resides in the cytoplasm. Its subcellular location is the cytosol. It localises to the rough endoplasmic reticulum. This is Small ribosomal subunit protein eS21 (RpS21) from Agriotes lineatus (Lined click beetle).